We begin with the raw amino-acid sequence, 334 residues long: Anthranilate phosphoribosyltransferase (334 aa).

5-phospho-alpha-D-ribose 1-diphosphate contacts are provided by residues G81, 84 to 85 (GD), T89, 91 to 94 (NIST), 109 to 117 (KHGSRSVSS), and A121. Anthranilate is bound at residue G81. Residue S93 coordinates Mg(2+). R167 is a binding site for anthranilate. Mg(2+) contacts are provided by D225 and E226.

Belongs to the anthranilate phosphoribosyltransferase family. Homodimer. It depends on Mg(2+) as a cofactor.

It catalyses the reaction N-(5-phospho-beta-D-ribosyl)anthranilate + diphosphate = 5-phospho-alpha-D-ribose 1-diphosphate + anthranilate. Its pathway is amino-acid biosynthesis; L-tryptophan biosynthesis; L-tryptophan from chorismate: step 2/5. Catalyzes the transfer of the phosphoribosyl group of 5-phosphorylribose-1-pyrophosphate (PRPP) to anthranilate to yield N-(5'-phosphoribosyl)-anthranilate (PRA). The protein is Anthranilate phosphoribosyltransferase of Actinobacillus pleuropneumoniae serotype 7 (strain AP76).